We begin with the raw amino-acid sequence, 365 residues long: tRNA/tmRNA (uracil-C(5))-methyltransferase (365 aa).

Residues Q189, Y217, N222, E238, and D298 each coordinate S-adenosyl-L-methionine. C323 functions as the Nucleophile in the catalytic mechanism. E357 functions as the Proton acceptor in the catalytic mechanism.

This sequence belongs to the class I-like SAM-binding methyltransferase superfamily. RNA M5U methyltransferase family. TrmA subfamily.

It catalyses the reaction uridine(54) in tRNA + S-adenosyl-L-methionine = 5-methyluridine(54) in tRNA + S-adenosyl-L-homocysteine + H(+). The catalysed reaction is uridine(341) in tmRNA + S-adenosyl-L-methionine = 5-methyluridine(341) in tmRNA + S-adenosyl-L-homocysteine + H(+). Its function is as follows. Dual-specificity methyltransferase that catalyzes the formation of 5-methyluridine at position 54 (m5U54) in all tRNAs, and that of position 341 (m5U341) in tmRNA (transfer-mRNA). The protein is tRNA/tmRNA (uracil-C(5))-methyltransferase of Shewanella baltica (strain OS155 / ATCC BAA-1091).